A 284-amino-acid chain; its full sequence is Pantothenate synthetase (284 aa).

30 to 37 (MGNLHDGH) is a binding site for ATP. Catalysis depends on H37, which acts as the Proton donor. Position 61 (Q61) interacts with (R)-pantoate. Q61 is a binding site for beta-alanine. Residue 149–152 (GEKD) coordinates ATP. Q155 serves as a coordination point for (R)-pantoate. ATP contacts are provided by residues V178 and 186–189 (LSSR).

This sequence belongs to the pantothenate synthetase family. In terms of assembly, homodimer.

The protein localises to the cytoplasm. It carries out the reaction (R)-pantoate + beta-alanine + ATP = (R)-pantothenate + AMP + diphosphate + H(+). It functions in the pathway cofactor biosynthesis; (R)-pantothenate biosynthesis; (R)-pantothenate from (R)-pantoate and beta-alanine: step 1/1. Functionally, catalyzes the condensation of pantoate with beta-alanine in an ATP-dependent reaction via a pantoyl-adenylate intermediate. The sequence is that of Pantothenate synthetase from Erwinia tasmaniensis (strain DSM 17950 / CFBP 7177 / CIP 109463 / NCPPB 4357 / Et1/99).